The sequence spans 1118 residues: Cytospin-A (1118 aa).

Disordered stretches follow at residues 1–50 (MKKA…AALS), 75–175 (KKSN…DNQI), 294–324 (SLSP…GSVE), and 359–391 (SSDD…NASE). Low complexity-rich tracts occupy residues 34-48 (APTG…AAAA), 80-90 (SSAAPSAPAPA), and 99-113 (KSST…RSTS). Residues 120-131 (SSTRERLRERTR) are compositionally biased toward basic and acidic residues. The segment covering 133-145 (NQSKKLPSVSQGA) has biased composition (polar residues). The segment covering 158 to 171 (TATEGDIRMSKSKS) has biased composition (basic and acidic residues). The stretch at 168 to 281 (KSKSDNQISD…LNALGFSLEQ (114 aa)) forms a coiled coil. A compositionally biased stretch (polar residues) spans 294 to 304 (SLSPEITPGNQ). The span at 359-373 (SSDDALDAPSSSESE) shows a compositional bias: low complexity. Residues serine 385, serine 386, and serine 390 each carry the phosphoserine modification. Coiled-coil stretches lie at residues 395–450 (ACLT…MESL) and 488–808 (RYME…RGRV). Phosphoserine occurs at positions 869, 882, and 888. Residues 916–999 (EHLLRTSSTS…STRSRIREER (84 aa)) are disordered. A compositionally biased stretch (basic and acidic residues) spans 947–957 (RSSEEMKRDIS). Over residues 972–992 (TTSPQLSLSSSPTASVTPSTR) the composition is skewed to low complexity. Residues 1012–1117 (GSKRNALLKW…YVTAIYKYFE (106 aa)) enclose the Calponin-homology (CH) domain.

The protein belongs to the cytospin-A family. As to quaternary structure, may interact with both microtubules and actin cytoskeleton.

It is found in the cytoplasm. Its subcellular location is the cytoskeleton. The protein localises to the spindle. The protein resides in the cell junction. It localises to the gap junction. Functionally, involved in cytokinesis and spindle organization. May play a role in actin cytoskeleton organization and microtubule stabilization and hence required for proper cell adhesion and migration. This Rattus norvegicus (Rat) protein is Cytospin-A (Specc1l).